A 276-amino-acid polypeptide reads, in one-letter code: Large ribosomal subunit protein uL2 (276 aa).

2 disordered regions span residues 1 to 20 and 219 to 276; these read MGIK…TTND and TVRG…RRKK. Over residues 7 to 20 the composition is skewed to polar residues; sequence NPTTNGRRNMTTND.

It belongs to the universal ribosomal protein uL2 family. In terms of assembly, part of the 50S ribosomal subunit. Forms a bridge to the 30S subunit in the 70S ribosome.

In terms of biological role, one of the primary rRNA binding proteins. Required for association of the 30S and 50S subunits to form the 70S ribosome, for tRNA binding and peptide bond formation. It has been suggested to have peptidyltransferase activity; this is somewhat controversial. Makes several contacts with the 16S rRNA in the 70S ribosome. This Bacillus cereus (strain G9842) protein is Large ribosomal subunit protein uL2.